A 360-amino-acid chain; its full sequence is Phosphoserine aminotransferase (360 aa).

R41 is a binding site for L-glutamate. Pyridoxal 5'-phosphate is bound by residues W101, T152, D172, and Q195. K196 is subject to N6-(pyridoxal phosphate)lysine. 237–238 (NT) provides a ligand contact to pyridoxal 5'-phosphate.

The protein belongs to the class-V pyridoxal-phosphate-dependent aminotransferase family. SerC subfamily. As to quaternary structure, homodimer. It depends on pyridoxal 5'-phosphate as a cofactor.

It is found in the cytoplasm. It carries out the reaction O-phospho-L-serine + 2-oxoglutarate = 3-phosphooxypyruvate + L-glutamate. The enzyme catalyses 4-(phosphooxy)-L-threonine + 2-oxoglutarate = (R)-3-hydroxy-2-oxo-4-phosphooxybutanoate + L-glutamate. Its pathway is amino-acid biosynthesis; L-serine biosynthesis; L-serine from 3-phospho-D-glycerate: step 2/3. The protein operates within cofactor biosynthesis; pyridoxine 5'-phosphate biosynthesis; pyridoxine 5'-phosphate from D-erythrose 4-phosphate: step 3/5. Catalyzes the reversible conversion of 3-phosphohydroxypyruvate to phosphoserine and of 3-hydroxy-2-oxo-4-phosphonooxybutanoate to phosphohydroxythreonine. The sequence is that of Phosphoserine aminotransferase from Burkholderia vietnamiensis (strain G4 / LMG 22486) (Burkholderia cepacia (strain R1808)).